The following is a 311-amino-acid chain: Probable deoxyhypusine synthase (311 aa).

Lysine 284 serves as the catalytic Nucleophile.

Belongs to the deoxyhypusine synthase family. The cofactor is NAD(+).

It catalyses the reaction [eIF5A protein]-L-lysine + spermidine = [eIF5A protein]-deoxyhypusine + propane-1,3-diamine. The protein operates within protein modification; eIF5A hypusination. Functionally, catalyzes the NAD-dependent oxidative cleavage of spermidine and the subsequent transfer of the butylamine moiety of spermidine to the epsilon-amino group of a specific lysine residue of the eIF-5A precursor protein to form the intermediate deoxyhypusine residue. This Sulfurisphaera tokodaii (strain DSM 16993 / JCM 10545 / NBRC 100140 / 7) (Sulfolobus tokodaii) protein is Probable deoxyhypusine synthase (dys).